A 344-amino-acid polypeptide reads, in one-letter code: UDP-3-O-acylglucosamine N-acyltransferase (344 aa).

Catalysis depends on His248, which acts as the Proton acceptor.

The protein belongs to the transferase hexapeptide repeat family. LpxD subfamily. In terms of assembly, homotrimer.

The catalysed reaction is a UDP-3-O-[(3R)-3-hydroxyacyl]-alpha-D-glucosamine + a (3R)-hydroxyacyl-[ACP] = a UDP-2-N,3-O-bis[(3R)-3-hydroxyacyl]-alpha-D-glucosamine + holo-[ACP] + H(+). Its pathway is bacterial outer membrane biogenesis; LPS lipid A biosynthesis. Functionally, catalyzes the N-acylation of UDP-3-O-acylglucosamine using 3-hydroxyacyl-ACP as the acyl donor. Is involved in the biosynthesis of lipid A, a phosphorylated glycolipid that anchors the lipopolysaccharide to the outer membrane of the cell. The polypeptide is UDP-3-O-acylglucosamine N-acyltransferase (Synechocystis sp. (strain ATCC 27184 / PCC 6803 / Kazusa)).